The sequence spans 96 residues: UPF0102 protein ML1607 (96 aa).

This sequence belongs to the UPF0102 family.

This is UPF0102 protein ML1607 from Mycobacterium leprae (strain TN).